The chain runs to 848 residues: Translation initiation factor IF-2 (848 aa).

The span at 1–10 shows a compositional bias: basic and acidic residues; the sequence is MSENNNDKIT. Disordered stretches follow at residues 1–79 and 121–163; these read MSEN…EKPV and AERQ…LFSS. A compositionally biased stretch (polar residues) spans 17 to 33; it reads LKRSGSETNTVKQNFNH. Over residues 121-138 the composition is skewed to basic and acidic residues; it reads AERQAAEKQAKESEEGLH. The span at 149–163 shows a compositional bias: polar residues; sequence KSSSNTTKPTPLFSS. Residues 346-513 enclose the tr-type G domain; that stretch reads TRPPIVTIMG…AILLQAEILD (168 aa). The interval 355–362 is G1; that stretch reads GHVDHGKT. 355 to 362 provides a ligand contact to GTP; it reads GHVDHGKT. Positions 380–384 are G2; sequence GITQH. The tract at residues 401–404 is G3; the sequence is DTPG. Residues 401-405 and 455-458 each bind GTP; these read DTPGH and NKID. Residues 455-458 form a G4 region; that stretch reads NKID. Residues 491–493 form a G5 region; it reads SAK.

The protein belongs to the TRAFAC class translation factor GTPase superfamily. Classic translation factor GTPase family. IF-2 subfamily.

The protein resides in the cytoplasm. In terms of biological role, one of the essential components for the initiation of protein synthesis. Protects formylmethionyl-tRNA from spontaneous hydrolysis and promotes its binding to the 30S ribosomal subunits. Also involved in the hydrolysis of GTP during the formation of the 70S ribosomal complex. The chain is Translation initiation factor IF-2 from Bartonella bacilliformis (strain ATCC 35685 / KC583 / Herrer 020/F12,63).